The chain runs to 235 residues: NAD(P)H-quinone oxidoreductase subunit K (235 aa).

Positions 52, 53, 117, and 148 each coordinate [4Fe-4S] cluster. Positions 216 to 226 are enriched in low complexity; that stretch reads AGAAVAPQLPV. Residues 216–235 are disordered; that stretch reads AGAAVAPQLPVTEKEGRDRA.

Belongs to the complex I 20 kDa subunit family. In terms of assembly, NDH-1 can be composed of about 15 different subunits; different subcomplexes with different compositions have been identified which probably have different functions. The cofactor is [4Fe-4S] cluster.

It is found in the cellular thylakoid membrane. It catalyses the reaction a plastoquinone + NADH + (n+1) H(+)(in) = a plastoquinol + NAD(+) + n H(+)(out). The enzyme catalyses a plastoquinone + NADPH + (n+1) H(+)(in) = a plastoquinol + NADP(+) + n H(+)(out). Functionally, NDH-1 shuttles electrons from an unknown electron donor, via FMN and iron-sulfur (Fe-S) centers, to quinones in the respiratory and/or the photosynthetic chain. The immediate electron acceptor for the enzyme in this species is believed to be plastoquinone. Couples the redox reaction to proton translocation, and thus conserves the redox energy in a proton gradient. Cyanobacterial NDH-1 also plays a role in inorganic carbon-concentration. The protein is NAD(P)H-quinone oxidoreductase subunit K of Synechococcus elongatus (strain ATCC 33912 / PCC 7942 / FACHB-805) (Anacystis nidulans R2).